A 286-amino-acid chain; its full sequence is B3 domain-containing protein REM11 (286 aa).

A DNA-binding region (TF-B3 1) is located at residues 1–70; the sequence is MAWNLAIITL…TPMLSLVSTQ (70 aa). Residues 68-114 are disordered; it reads STQSTSHKSQKRECSKHSEKESISAVPSKGKKNRKARSNREERRDSS. Residues 78–89 show a composition bias toward basic and acidic residues; the sequence is KRECSKHSEKES. The TF-B3 2 DNA-binding region spans 119-219; it reads NRFVTFTPED…RAQVCFYGVF (101 aa).

It is found in the nucleus. The chain is B3 domain-containing protein REM11 (REM11) from Arabidopsis thaliana (Mouse-ear cress).